A 199-amino-acid polypeptide reads, in one-letter code: Putative peroxiredoxin ycf42 (199 aa).

Residues 8–165 (LRVGQLAPDF…TLRVLQAIQY (158 aa)) enclose the Thioredoxin domain. Cys-53 functions as the Cysteine sulfenic acid (-SOH) intermediate in the catalytic mechanism.

This sequence belongs to the peroxiredoxin family. AhpC/Prx1 subfamily. Homodimer; disulfide-linked, upon oxidation. The Cys-53-SH group is the primary site of oxidation by H(2)O(2), and the oxidized Cys-53 (probably Cys-SOH) rapidly reacts with Cys-174-SH of the other subunit to form an intermolecular disulfide. This disulfide is subsequently reduced by thioredoxin.

The protein localises to the plastid. Its subcellular location is the chloroplast. It catalyses the reaction a hydroperoxide + [thioredoxin]-dithiol = an alcohol + [thioredoxin]-disulfide + H2O. Thiol-specific peroxidase that catalyzes the reduction of hydrogen peroxide and organic hydroperoxides to water and alcohols, respectively. Plays a role in cell protection against oxidative stress by detoxifying peroxides. The polypeptide is Putative peroxiredoxin ycf42 (ycf42) (Pyropia yezoensis (Susabi-nori)).